The following is a 127-amino-acid chain: uncharacterized protein (127 aa).

A coiled-coil region spans residues 71-126 (FYLREYRRIRRRIKELKNRAKYISKGEIAYNPKIMKEVEALKEKLSEIEKKIEELK).

This is an uncharacterized protein from Aquifex aeolicus (strain VF5).